Consider the following 337-residue polypeptide: tRNA N6-adenosine threonylcarbamoyltransferase (337 aa).

The Fe cation site is built by H111 and H115. Substrate-binding positions include 134–138, D167, G180, and N272; that span reads LVSGG. Residue D300 participates in Fe cation binding.

Belongs to the KAE1 / TsaD family. Fe(2+) is required as a cofactor.

The protein resides in the cytoplasm. The enzyme catalyses L-threonylcarbamoyladenylate + adenosine(37) in tRNA = N(6)-L-threonylcarbamoyladenosine(37) in tRNA + AMP + H(+). In terms of biological role, required for the formation of a threonylcarbamoyl group on adenosine at position 37 (t(6)A37) in tRNAs that read codons beginning with adenine. Is involved in the transfer of the threonylcarbamoyl moiety of threonylcarbamoyl-AMP (TC-AMP) to the N6 group of A37, together with TsaE and TsaB. TsaD likely plays a direct catalytic role in this reaction. The polypeptide is tRNA N6-adenosine threonylcarbamoyltransferase (Escherichia coli O157:H7).